Here is a 214-residue protein sequence, read N- to C-terminus: Adenylate kinase (214 aa).

G10–T15 lines the ATP pocket. The interval S30 to V59 is NMP. AMP-binding positions include T31, R36, K57–V59, G85–R88, and Q92. The interval G122–D159 is LID. Residues R123 and V132–Y133 contribute to the ATP site. R156 and R167 together coordinate AMP. N6-acetyllysine is present on K192. K200 provides a ligand contact to ATP.

The protein belongs to the adenylate kinase family. Monomer.

It is found in the cytoplasm. The enzyme catalyses AMP + ATP = 2 ADP. Its pathway is purine metabolism; AMP biosynthesis via salvage pathway; AMP from ADP: step 1/1. Catalyzes the reversible transfer of the terminal phosphate group between ATP and AMP. Plays an important role in cellular energy homeostasis and in adenine nucleotide metabolism. The protein is Adenylate kinase of Escherichia coli O8 (strain IAI1).